Reading from the N-terminus, the 83-residue chain is Putative defensin-like protein 111 (83 aa).

A signal peptide spans 1–24 (MAITKKILLPFVLTILFVISSVHC). Disulfide bonds link Cys-40-Cys-80, Cys-46-Cys-69, Cys-54-Cys-78, and Cys-58-Cys-79.

This sequence belongs to the DEFL family.

It localises to the secreted. This Arabidopsis thaliana (Mouse-ear cress) protein is Putative defensin-like protein 111 (LCR50).